Reading from the N-terminus, the 1190-residue chain is Phosphatidylinositol-3,5-bisphosphate 3-phosphatase MTMR4 (1190 aa).

A Phosphoserine modification is found at Ser-8. Residues 153 to 570 (EHIRCRQEAE…RALHLWTAVY (418 aa)) enclose the Myotubularin phosphatase domain. A 1,2-diacyl-sn-glycero-3-phospho-(1D-myo-inositol-3,5-bisphosphate) contacts are provided by Asn-320, Asn-345, and Ile-346. Asn-320, Asn-345, and Ile-346 together coordinate a 1,2-diacyl-sn-glycero-3-phospho-(1D-myo-inositol-3-phosphate). Residue Cys-407 is the Phosphocysteine intermediate of the active site. Ser-408, Asp-409, Gly-410, Trp-411, Asp-412, Arg-413, Lys-449, and Arg-453 together coordinate a 1,2-diacyl-sn-glycero-3-phospho-(1D-myo-inositol-3,5-bisphosphate). The a 1,2-diacyl-sn-glycero-3-phospho-(1D-myo-inositol-3-phosphate) site is built by Ser-408, Asp-409, Gly-410, Trp-411, Asp-412, and Arg-413. An a 1,2-diacyl-sn-glycero-3-phospho-(1D-myo-inositol-3-phosphate)-binding site is contributed by Arg-453. Phosphoserine is present on residues Ser-610 and Ser-629. 3 disordered regions span residues 616-694 (SACD…FKGH), 724-749 (ETEALAPDPSAQEEQGRTSDGLGKPP), and 773-848 (DFPE…PSSV). Residues 618 to 637 (CDTSSPLTRTSSDPNLNNHS) are compositionally biased toward polar residues. A compositionally biased stretch (polar residues) spans 782 to 847 (LTGTPQQPHL…SISHQEQPSS (66 aa)). The PY-motif; substrate motif for NEDD4 signature appears at 999 to 1003 (VPPLY). Residues 1020–1052 (LRQIEAGYRQEVEQLRRQVRELQMRLDIRHCCA) are a coiled coil. An FYVE-type zinc finger spans residues 1109–1169 (DHMASHCFNC…VCNSCYEHIQ (61 aa)). Zn(2+) contacts are provided by Cys-1115, Cys-1118, Cys-1131, Cys-1134, Cys-1139, Cys-1142, Cys-1161, and Cys-1164.

This sequence belongs to the protein-tyrosine phosphatase family. Non-receptor class myotubularin subfamily. In terms of assembly, homooligomeric. Forms MTMR3:MTMR4 heterooligomers; regulates the localization of both proteins. The MTMR3:MTMR4 heterooligomer can also recruit both CEP55 and PLK1; occurs during early mitosis, regulates the phosphorylation of CEP55 by PLK1 and its recruitment to the midbody where it can mediate cell abscission. Interacts with SMAD2 and SMAD3; negatively regulates TGF-beta signaling through SMAD2 and SMAD3 dephosphorylation and retention in endosomes. Interacts with SMAD1; negatively regulates BMP signaling through SMAD1 dephosphorylation and retention in endosomes. Post-translationally, ubiquitinated. Ubiquitination by NEDD4 probably leads to proteasomal degradation. Phosphorylated by CDK1 during mitosis.

The protein localises to the early endosome membrane. It localises to the recycling endosome membrane. The protein resides in the late endosome membrane. Its subcellular location is the cytoplasmic vesicle. It is found in the phagosome membrane. It catalyses the reaction a 1,2-diacyl-sn-glycero-3-phospho-(1D-myo-inositol-3-phosphate) + H2O = a 1,2-diacyl-sn-glycero-3-phospho-(1D-myo-inositol) + phosphate. The enzyme catalyses a 1,2-diacyl-sn-glycero-3-phospho-(1D-myo-inositol-3,5-bisphosphate) + H2O = a 1,2-diacyl-sn-glycero-3-phospho-(1D-myo-inositol-5-phosphate) + phosphate. It carries out the reaction 1,2-dioctanoyl-sn-glycero-3-phospho-(1-D-myo-inositol-3-phosphate) + H2O = 1,2-dioctanoyl-sn-glycero-3-phospho-(1D-myo-inositol) + phosphate. The catalysed reaction is 1,2-dioctanoyl-sn-glycero-3-phospho-(1D-myo-inositol-3,5-bisphosphate) + H2O = 1,2-dioctanoyl-sn-glycero-3-phospho-(1D-myo-inositol-5-phosphate) + phosphate. Functionally, lipid phosphatase that specifically dephosphorylates the D-3 position of phosphatidylinositol 3-phosphate and phosphatidylinositol 3,5-bisphosphate, generating phosphatidylinositol and phosphatidylinositol 5-phosphate. Decreases the levels of phosphatidylinositol 3-phosphate, a phospholipid found in cell membranes where it acts as key regulator of both cell signaling and intracellular membrane traffic, in a subset of endosomal membranes to negatively regulate both endocytic recycling and trafficking and/or maturation of endosomes toward lysosomes. Through phosphatidylinositol 3-phosphate turnover in phagosome membranes regulates phagocytosis and phagosome maturation. By decreasing phosphatidylinositol 3-monophosphate (PI3P) levels in immune cells it can also regulate the innate immune response. Beside its lipid phosphatase activity, can also function as a molecular adapter to regulate midbody abscission during mitotic cytokinesis. Can also negatively regulate TGF-beta and BMP signaling through Smad proteins dephosphorylation and retention in endosomes. This Mus musculus (Mouse) protein is Phosphatidylinositol-3,5-bisphosphate 3-phosphatase MTMR4.